Consider the following 307-residue polypeptide: Ribonuclease Z (307 aa).

Zn(2+) is bound by residues histidine 63, histidine 65, aspartate 67, histidine 68, histidine 141, aspartate 212, and histidine 270. The Proton acceptor role is filled by aspartate 67.

The protein belongs to the RNase Z family. As to quaternary structure, homodimer. Requires Zn(2+) as cofactor.

The catalysed reaction is Endonucleolytic cleavage of RNA, removing extra 3' nucleotides from tRNA precursor, generating 3' termini of tRNAs. A 3'-hydroxy group is left at the tRNA terminus and a 5'-phosphoryl group is left at the trailer molecule.. Zinc phosphodiesterase, which displays some tRNA 3'-processing endonuclease activity. Probably involved in tRNA maturation, by removing a 3'-trailer from precursor tRNA. The protein is Ribonuclease Z of Bacillus cereus (strain ATCC 10987 / NRS 248).